The following is a 260-amino-acid chain: Methanethiol S-methyltransferase (260 aa).

5 helical membrane-spanning segments follow: residues 27-47 (CYLFFLLTALYLIGFLAGIGV), 55-75 (PGITWPLAVLVDAILITLFAA), 107-127 (CLVLALLFVLWQPIATPVWNV), 134-154 (GLLIALFWLGWGIVLLATFLI), and 196-216 (FLIAFWATPDMTAGHLLFAIL).

The protein belongs to the nurim family.

Its subcellular location is the membrane. It catalyses the reaction methanethiol + S-adenosyl-L-methionine = dimethyl sulfide + S-adenosyl-L-homocysteine + H(+). Its function is as follows. Catalyzes the methylation of methanethiol (MeSH) to yield dimethylsulphide (DMS). In Pseudomonas sp. (strain GM41(2012)), this protein is Methanethiol S-methyltransferase.